Reading from the N-terminus, the 79-residue chain is Sulfur carrier protein TusA (79 aa).

The Cysteine persulfide intermediate role is filled by cysteine 17.

This sequence belongs to the sulfur carrier protein TusA family.

Its subcellular location is the cytoplasm. Sulfur carrier protein which probably makes part of a sulfur-relay system. The sequence is that of Sulfur carrier protein TusA from Haemophilus ducreyi (strain 35000HP / ATCC 700724).